We begin with the raw amino-acid sequence, 552 residues long: Protein FAM234A (552 aa).

Residues 1-48 (MTDGKDLEAEIHPLKSENRKVPENAGALAGKEPRGTPAPQTRLSHCRT) are Cytoplasmic-facing. Residues 49-69 (AAFFLSLFACLLVVFVVSFII) traverse the membrane as a helical; Signal-anchor for type II membrane protein segment. Over 70-552 (PCPDRPALQG…LSRLRYRSEA (483 aa)) the chain is Extracellular. Residues Asn-115, Asn-238, and Asn-473 are each glycosylated (N-linked (GlcNAc...) asparagine).

This sequence belongs to the FAM234 family.

It localises to the membrane. The chain is Protein FAM234A (FAM234A) from Bos taurus (Bovine).